Reading from the N-terminus, the 245-residue chain is 5-oxoprolinase subunit A (245 aa).

This sequence belongs to the LamB/PxpA family. In terms of assembly, forms a complex composed of PxpA, PxpB and PxpC.

It catalyses the reaction 5-oxo-L-proline + ATP + 2 H2O = L-glutamate + ADP + phosphate + H(+). Functionally, catalyzes the cleavage of 5-oxoproline to form L-glutamate coupled to the hydrolysis of ATP to ADP and inorganic phosphate. The sequence is that of 5-oxoprolinase subunit A from Haemophilus influenzae (strain PittGG).